The following is a 730-amino-acid chain: Elongation factor 2 (730 aa).

In terms of domain architecture, tr-type G spans 19 to 260 (DRIRNIGIVA…MVVKHLPNPL (242 aa)). Residues 28-35 (AHIDHGKT), 94-98 (DTPGH), and 148-151 (NKVD) each bind GTP. The residue at position 597 (His597) is a Diphthamide.

Belongs to the TRAFAC class translation factor GTPase superfamily. Classic translation factor GTPase family. EF-G/EF-2 subfamily.

It is found in the cytoplasm. In terms of biological role, catalyzes the GTP-dependent ribosomal translocation step during translation elongation. During this step, the ribosome changes from the pre-translocational (PRE) to the post-translocational (POST) state as the newly formed A-site-bound peptidyl-tRNA and P-site-bound deacylated tRNA move to the P and E sites, respectively. Catalyzes the coordinated movement of the two tRNA molecules, the mRNA and conformational changes in the ribosome. The chain is Elongation factor 2 from Methanoculleus marisnigri (strain ATCC 35101 / DSM 1498 / JR1).